A 206-amino-acid chain; its full sequence is Ras-related protein Ral-B (206 aa).

21-29 (GSGGVGKSA) is a GTP binding site. The Effector region signature appears at 43 to 51 (YEPTKADSY). Residues 68–72 (DTAGQ), 128–131 (NKSD), and 158–160 (SAK) each bind GTP. Positions 180–189 (KMSENKDKNG) are enriched in basic and acidic residues. Positions 180 to 206 (KMSENKDKNGKKSGKNKKSFKERCCLL) are disordered. Cys203 is modified (cysteine methyl ester). Cys203 carries the S-geranylgeranyl cysteine lipid modification. Positions 204-206 (CLL) are cleaved as a propeptide — removed in mature form.

The protein belongs to the small GTPase superfamily. Ras family. As to quaternary structure, interacts with EXOC2/Sec5 and EXOC8/Exo84. Interacts (via effector domain) with RALBP1. Prenylation is essential for membrane localization. In terms of processing, the farnesylated form confers resistance to the proapoptotic and anti-anchorage-dependent growth effects of some geranylgeranyltransferase I inhibitors.

It localises to the cell membrane. The protein resides in the midbody. It catalyses the reaction GTP + H2O = GDP + phosphate + H(+). Its activity is regulated as follows. Alternates between an inactive form bound to GDP and an active form bound to GTP. Activated by a guanine nucleotide-exchange factor (GEF) and inactivated by a GTPase-activating protein (GAP). Functionally, multifunctional GTPase involved in a variety of cellular processes including gene expression, cell migration, cell proliferation, oncogenic transformation and membrane trafficking. Accomplishes its multiple functions by interacting with distinct downstream effectors. Acts as a GTP sensor for GTP-dependent exocytosis of dense core vesicles. Required both to stabilize the assembly of the exocyst complex and to localize functional exocyst complexes to the leading edge of migrating cells. Required for suppression of apoptosis. In late stages of cytokinesis, upon completion of the bridge formation between dividing cells, mediates exocyst recruitment to the midbody to drive abscission. Involved in ligand-dependent receptor mediated endocytosis of the EGF and insulin receptors. This is Ras-related protein Ral-B (RALB) from Macaca fascicularis (Crab-eating macaque).